Consider the following 334-residue polypeptide: MKTLGEFIVEKQQDFSHATGELTALLSAIKLGAKIIHRDINKAGLVDILGTSGVSNVQGEVQMKLDLYANEKLKAALKARGEVAGIASEEEDDIVIFEGDRAENAKYVVLMDPLDGSSNIDVNVSVGTIFSIYRRITPIGQPVTEKDFLQPGHRQVAAGYVVYGSSTMLVYTTGCGVHAFTYDPSLGVFCLSHEKVQFPPNGNMYSINEGNYIKFPMGVKKYIKYCQEQDEATQRPYTTRYIGSLVADFHRNLLKGGIYIYPSTASHPSGKLRLLYECNPMAFLAEQAGGKASDGANRILDITPSKLHQRVPFFVGSKSMVEKAESFMAEFPDE.

Mg(2+)-binding residues include Glu-89, Asp-112, Leu-114, and Asp-115. Substrate-binding positions include 115-118 (DGSS), Asn-208, Tyr-241, and Lys-271. Residue Glu-277 participates in Mg(2+) binding.

The protein belongs to the FBPase class 1 family. In terms of assembly, homotetramer. It depends on Mg(2+) as a cofactor.

Its subcellular location is the cytoplasm. The enzyme catalyses beta-D-fructose 1,6-bisphosphate + H2O = beta-D-fructose 6-phosphate + phosphate. Its pathway is carbohydrate biosynthesis; gluconeogenesis. The polypeptide is Fructose-1,6-bisphosphatase class 1 (Photorhabdus laumondii subsp. laumondii (strain DSM 15139 / CIP 105565 / TT01) (Photorhabdus luminescens subsp. laumondii)).